A 681-amino-acid polypeptide reads, in one-letter code: PTS system glucose-specific EIICBA component (681 aa).

Positions 3-414 (KKLFGQLQRI…LKYKTPGRED (412 aa)) constitute a PTS EIIC type-1 domain. 10 consecutive transmembrane segments (helical) span residues 16-36 (LMLPVAILPAAGLLLAIGTAI), 73-93 (MIFALGVAIGLAGGDGVAAIA), 126-146 (ILGIPTLQTGVFGGIIIGALA), 170-190 (FVPIMMATTSFILAFPMALIW), 199-219 (AFSTGLLDSNTGVAVFLFGFI), 273-293 (FMQGEFPVMMFGLPAAALAIY), 303-323 (VVAGLMGSAALTSFLTGITEP), 328-348 (FLFVAPLLFFIHAVLDGLSFL), 355-375 (VHLGYTFSGGFIDYVLLGVLP), and 383-403 (VIPVGLVYAVIYYFVFRFLIV). A PTS EIIB type-1 domain is found at 425-506 (TELPYAVLEA…QQIMNGQVVE (82 aa)). Residue Cys447 is the Phosphocysteine intermediate; for EIIB activity of the active site. Positions 551–655 (DQVFSEKMMG…SDITPIIVTQ (105 aa)) constitute a PTS EIIA type-1 domain. His603 acts as the Tele-phosphohistidine intermediate; for EIIA activity in catalysis.

The protein resides in the cell membrane. The catalysed reaction is N(pros)-phospho-L-histidyl-[protein] + D-glucose(out) = D-glucose 6-phosphate(in) + L-histidyl-[protein]. The phosphoenolpyruvate-dependent sugar phosphotransferase system (sugar PTS), a major carbohydrate active transport system, catalyzes the phosphorylation of incoming sugar substrates concomitantly with their translocation across the cell membrane. This system is involved in glucose transport. This is PTS system glucose-specific EIICBA component (ptsG) from Staphylococcus aureus (strain JH9).